Here is a 437-residue protein sequence, read N- to C-terminus: tRNA-2-methylthio-N(6)-dimethylallyladenosine synthase (437 aa).

The MTTase N-terminal domain occupies 1-115; that stretch reads MKVYIETMGC…ISQVIHKEKA (115 aa). Positions 10, 46, 78, 148, 152, and 155 each coordinate [4Fe-4S] cluster. The region spanning 134 to 367 is the Radical SAM core domain; it reads KKAQIRSLLN…QNRHKEILEE (234 aa). The 67-residue stretch at 370–436 folds into the TRAM domain; sequence KLEVGKTHVV…KGRLIAAIKG (67 aa).

It belongs to the methylthiotransferase family. MiaB subfamily. As to quaternary structure, monomer. The cofactor is [4Fe-4S] cluster.

It is found in the cytoplasm. It catalyses the reaction N(6)-dimethylallyladenosine(37) in tRNA + (sulfur carrier)-SH + AH2 + 2 S-adenosyl-L-methionine = 2-methylsulfanyl-N(6)-dimethylallyladenosine(37) in tRNA + (sulfur carrier)-H + 5'-deoxyadenosine + L-methionine + A + S-adenosyl-L-homocysteine + 2 H(+). Catalyzes the methylthiolation of N6-(dimethylallyl)adenosine (i(6)A), leading to the formation of 2-methylthio-N6-(dimethylallyl)adenosine (ms(2)i(6)A) at position 37 in tRNAs that read codons beginning with uridine. This Helicobacter pylori (strain HPAG1) protein is tRNA-2-methylthio-N(6)-dimethylallyladenosine synthase.